The primary structure comprises 448 residues: Bifunctional protein GlmU (448 aa).

Residues 1–230 (MRSCLSIVLA…FDNIVGINNC (230 aa)) are pyrophosphorylase. UDP-N-acetyl-alpha-D-glucosamine-binding positions include 9–12 (LAAG), K23, Q76, and 81–82 (GT). Mg(2+) is bound at residue D106. Residues G142, E156, N171, and N228 each contribute to the UDP-N-acetyl-alpha-D-glucosamine site. N228 provides a ligand contact to Mg(2+). The segment at 231–251 (FELFEADSLWQKRKARDLMLS) is linker. The interval 252 to 448 (GVTILKPETV…VRLSGNQQKK (197 aa)) is N-acetyltransferase. UDP-N-acetyl-alpha-D-glucosamine is bound by residues R317 and K335. Catalysis depends on H347, which acts as the Proton acceptor. Residues Y350 and N361 each coordinate UDP-N-acetyl-alpha-D-glucosamine. Acetyl-CoA contacts are provided by residues A364, 370 to 371 (NY), S389, S407, and R424.

In the N-terminal section; belongs to the N-acetylglucosamine-1-phosphate uridyltransferase family. It in the C-terminal section; belongs to the transferase hexapeptide repeat family. In terms of assembly, homotrimer. Mg(2+) is required as a cofactor.

The protein localises to the cytoplasm. The catalysed reaction is alpha-D-glucosamine 1-phosphate + acetyl-CoA = N-acetyl-alpha-D-glucosamine 1-phosphate + CoA + H(+). The enzyme catalyses N-acetyl-alpha-D-glucosamine 1-phosphate + UTP + H(+) = UDP-N-acetyl-alpha-D-glucosamine + diphosphate. It functions in the pathway nucleotide-sugar biosynthesis; UDP-N-acetyl-alpha-D-glucosamine biosynthesis; N-acetyl-alpha-D-glucosamine 1-phosphate from alpha-D-glucosamine 6-phosphate (route II): step 2/2. The protein operates within nucleotide-sugar biosynthesis; UDP-N-acetyl-alpha-D-glucosamine biosynthesis; UDP-N-acetyl-alpha-D-glucosamine from N-acetyl-alpha-D-glucosamine 1-phosphate: step 1/1. It participates in bacterial outer membrane biogenesis; LPS lipid A biosynthesis. Its function is as follows. Catalyzes the last two sequential reactions in the de novo biosynthetic pathway for UDP-N-acetylglucosamine (UDP-GlcNAc). The C-terminal domain catalyzes the transfer of acetyl group from acetyl coenzyme A to glucosamine-1-phosphate (GlcN-1-P) to produce N-acetylglucosamine-1-phosphate (GlcNAc-1-P), which is converted into UDP-GlcNAc by the transfer of uridine 5-monophosphate (from uridine 5-triphosphate), a reaction catalyzed by the N-terminal domain. This is Bifunctional protein GlmU from Bartonella quintana (strain Toulouse) (Rochalimaea quintana).